A 291-amino-acid chain; its full sequence is ATP synthase gamma chain (291 aa).

This sequence belongs to the ATPase gamma chain family. In terms of assembly, F-type ATPases have 2 components, CF(1) - the catalytic core - and CF(0) - the membrane proton channel. CF(1) has five subunits: alpha(3), beta(3), gamma(1), delta(1), epsilon(1). CF(0) has three main subunits: a, b and c.

Its subcellular location is the cell membrane. Its function is as follows. Produces ATP from ADP in the presence of a proton gradient across the membrane. The gamma chain is believed to be important in regulating ATPase activity and the flow of protons through the CF(0) complex. This chain is ATP synthase gamma chain, found in Streptococcus pyogenes serotype M1.